Reading from the N-terminus, the 583-residue chain is 2-succinyl-5-enolpyruvyl-6-hydroxy-3-cyclohexene-1-carboxylate synthase (583 aa).

This sequence belongs to the TPP enzyme family. MenD subfamily. Homodimer. It depends on Mg(2+) as a cofactor. Mn(2+) serves as cofactor. Thiamine diphosphate is required as a cofactor.

It catalyses the reaction isochorismate + 2-oxoglutarate + H(+) = 5-enolpyruvoyl-6-hydroxy-2-succinyl-cyclohex-3-ene-1-carboxylate + CO2. It functions in the pathway quinol/quinone metabolism; 1,4-dihydroxy-2-naphthoate biosynthesis; 1,4-dihydroxy-2-naphthoate from chorismate: step 2/7. Its pathway is quinol/quinone metabolism; menaquinone biosynthesis. Functionally, catalyzes the thiamine diphosphate-dependent decarboxylation of 2-oxoglutarate and the subsequent addition of the resulting succinic semialdehyde-thiamine pyrophosphate anion to isochorismate to yield 2-succinyl-5-enolpyruvyl-6-hydroxy-3-cyclohexene-1-carboxylate (SEPHCHC). The chain is 2-succinyl-5-enolpyruvyl-6-hydroxy-3-cyclohexene-1-carboxylate synthase from Chlorobium limicola (strain DSM 245 / NBRC 103803 / 6330).